Reading from the N-terminus, the 471-residue chain is Ubiquitin carboxyl-terminal hydrolase calypso (471 aa).

The UCH catalytic domain occupies 45 to 276 (GWLELESDPG…IRFNLMAVVP (232 aa)). Cysteine 131 (nucleophile) is an active-site residue. Histidine 213 serves as the catalytic Proton donor. The disordered stretch occupies residues 307-326 (DEQGESGNGDSQRPDTPTTL). The span at 314-326 (NGDSQRPDTPTTL) shows a compositional bias: polar residues. In terms of domain architecture, ULD spans 375 to 403 (NYDKFICTFLSMLAHQGVLGELVSQHLLP). The segment at 405–471 (KKVSGQGAAN…KGRNKCRKRK (67 aa)) is positively charged C-terminal tail required for binding nucleosomes. The disordered stretch occupies residues 412-471 (AANRISKQSNTASAGGSTTGASASTPKTQQQQAAAAKNGKSPSKTPGRRRKGRNKCRKRK). The segment covering 422–447 (TASAGGSTTGASASTPKTQQQQAAAA) has biased composition (low complexity). The span at 457 to 471 (PGRRRKGRNKCRKRK) shows a compositional bias: basic residues.

The protein belongs to the peptidase C12 family. BAP1 subfamily. In terms of assembly, catalytic component of the polycomb repressive deubiquitinase (PR-DUB) complex, at least composed of caly/calypso, Asx and sba (MBD5/6 homolog). The PR-DUB complex associates with nucleosomes to mediate deubiquitination of histone H2AK118ub1 substrates; the association requires the positively charged C-terminal tail of caly, probably due to direct binding of DNA. Interacts (via ULD domain) with Asx (via DEUBAD domain); the interaction produces a stable heterodimer with a composite binding site for ubiquitin. Homodimerizes (via coiled-coil hinge-region between the UCH and ULD domains) to mediate assembly of 2 copies of the caly-Asx heterodimer into a bisymmetric tetramer; dimerization enhances PR-DUB association with nucleosomes.

Its subcellular location is the nucleus. The enzyme catalyses Thiol-dependent hydrolysis of ester, thioester, amide, peptide and isopeptide bonds formed by the C-terminal Gly of ubiquitin (a 76-residue protein attached to proteins as an intracellular targeting signal).. Catalytic component of the polycomb repressive deubiquitinase (PR-DUB) complex, a complex that specifically mediates deubiquitination of histone H2A monoubiquitinated at 'Lys-119' (H2AK118ub1). Mediates bisymmetric organization of the PR-DUB complex and is involved in association with nucleosomes to mediate deubiquitination. Does not deubiquitinate monoubiquitinated histone H2B. Required to maintain the transcriptionally repressive state of homeotic genes throughout development. The PR-DUB complex has weak or no activity toward 'Lys-48'- and 'Lys-63'-linked polyubiquitin chains. Polycomb group (PcG) protein. This chain is Ubiquitin carboxyl-terminal hydrolase calypso, found in Drosophila sechellia (Fruit fly).